Here is a 321-residue protein sequence, read N- to C-terminus: LIMR family protein SELMODRAFT_432210 (321 aa).

The next 5 helical transmembrane spans lie at 28–48 (KQLW…VIPF), 116–133 (CFSL…LDLW), 139–159 (LCVF…FGGV), 240–260 (LVFG…ILVF), and 284–304 (LLGT…VISG).

This sequence belongs to the LIMR family.

The protein localises to the membrane. The polypeptide is LIMR family protein SELMODRAFT_432210 (Selaginella moellendorffii (Spikemoss)).